The following is a 245-amino-acid chain: MSVYAIIGGTGLTQLEGLTLSESLPIETPYGAPSAPLQRGRYAGREVLFLARHGHPHRFPPHQVNYRANLWALKQAGAEAVIAVNAVGGIHAAMGTGHLCVPHQLIDYTSGREHTYFAGDIEHVTHIDFSHPYDEPLRQRLIEALRALGLAHSSHGVYACTQGPRLETVAEIARLERDGNDIVGMTGMPEAALARELDLPYACLALVVNPAAGKSAGIITMAEIEQALHDGIGKVREVLARVLAG.

Phosphate-binding positions include Thr10 and 52–53 (RH). Met185 provides a ligand contact to substrate. Residue Thr186 participates in phosphate binding. 209–211 (NPA) contacts substrate.

It belongs to the PNP/MTAP phosphorylase family. MTAP subfamily. As to quaternary structure, homotrimer.

The catalysed reaction is S-methyl-5'-thioinosine + phosphate = 5-(methylsulfanyl)-alpha-D-ribose 1-phosphate + hypoxanthine. The protein operates within purine metabolism; purine nucleoside salvage. In terms of biological role, catalyzes the reversible phosphorylation of S-methyl-5'-thioinosine (MTI) to hypoxanthine and 5-methylthioribose-1-phosphate. Involved in the breakdown of S-methyl-5'-thioadenosine (MTA), a major by-product of polyamine biosynthesis. Catabolism of (MTA) occurs via deamination to MTI and phosphorolysis to hypoxanthine. Involved in quorum sensing. In Pseudomonas aeruginosa (strain ATCC 15692 / DSM 22644 / CIP 104116 / JCM 14847 / LMG 12228 / 1C / PRS 101 / PAO1), this protein is S-methyl-5'-thioinosine phosphorylase.